The following is a 262-amino-acid chain: Small ribosomal subunit protein eS1 (262 aa).

Residues 1 to 18 (MAVGKNKRISKGKKGSKK) are compositionally biased toward basic residues. The interval 1 to 20 (MAVGKNKRISKGKKGSKKKT) is disordered.

The protein belongs to the eukaryotic ribosomal protein eS1 family. In terms of assembly, component of the small ribosomal subunit. Mature ribosomes consist of a small (40S) and a large (60S) subunit. The 40S subunit contains about 33 different proteins and 1 molecule of RNA (18S). The 60S subunit contains about 49 different proteins and 3 molecules of RNA (25S, 5.8S and 5S).

The protein localises to the cytoplasm. The polypeptide is Small ribosomal subunit protein eS1 (Oryza sativa subsp. japonica (Rice)).